Here is a 428-residue protein sequence, read N- to C-terminus: Enolase (428 aa).

Gln-167 is a binding site for (2R)-2-phosphoglycerate. The Proton donor role is filled by Glu-209. Mg(2+) contacts are provided by Asp-246, Glu-288, and Asp-315. (2R)-2-phosphoglycerate is bound by residues Lys-340, Arg-369, Ser-370, and Lys-391. Residue Lys-340 is the Proton acceptor of the active site.

The protein belongs to the enolase family. As to quaternary structure, component of the RNA degradosome, a multiprotein complex involved in RNA processing and mRNA degradation. Requires Mg(2+) as cofactor.

It localises to the cytoplasm. It is found in the secreted. Its subcellular location is the cell surface. It catalyses the reaction (2R)-2-phosphoglycerate = phosphoenolpyruvate + H2O. The protein operates within carbohydrate degradation; glycolysis; pyruvate from D-glyceraldehyde 3-phosphate: step 4/5. Its function is as follows. Catalyzes the reversible conversion of 2-phosphoglycerate (2-PG) into phosphoenolpyruvate (PEP). It is essential for the degradation of carbohydrates via glycolysis. The chain is Enolase from Pseudomonas savastanoi pv. phaseolicola (strain 1448A / Race 6) (Pseudomonas syringae pv. phaseolicola (strain 1448A / Race 6)).